The chain runs to 191 residues: Guanylate kinase (191 aa).

The Guanylate kinase-like domain occupies 8-188 (GRLVVLAGPS…AVSDIKEILV (181 aa)). 15–22 (GPSAVGKS) provides a ligand contact to ATP.

This sequence belongs to the guanylate kinase family.

The protein localises to the cytoplasm. It catalyses the reaction GMP + ATP = GDP + ADP. In terms of biological role, essential for recycling GMP and indirectly, cGMP. This chain is Guanylate kinase, found in Corynebacterium diphtheriae (strain ATCC 700971 / NCTC 13129 / Biotype gravis).